Here is a 520-residue protein sequence, read N- to C-terminus: Sterile alpha motif domain-containing protein 3 (520 aa).

The region spanning 4 to 71 is the SAM domain; sequence WSVEQVCSWL…KYKQNTQGLK (68 aa). The interval 85–114 is disordered; it reads TEAARDYRDEESSSPARHGEQMPSFYPAEN.

The chain is Sterile alpha motif domain-containing protein 3 (SAMD3) from Homo sapiens (Human).